Reading from the N-terminus, the 142-residue chain is ATP synthase epsilon chain (142 aa).

It belongs to the ATPase epsilon chain family. In terms of assembly, F-type ATPases have 2 components, CF(1) - the catalytic core - and CF(0) - the membrane proton channel. CF(1) has five subunits: alpha(3), beta(3), gamma(1), delta(1), epsilon(1). CF(0) has three main subunits: a, b and c.

Its subcellular location is the cell inner membrane. Functionally, produces ATP from ADP in the presence of a proton gradient across the membrane. This chain is ATP synthase epsilon chain, found in Shewanella baltica (strain OS155 / ATCC BAA-1091).